The chain runs to 251 residues: WUSCHEL-related homeobox 4 (251 aa).

2 disordered regions span residues 1-21 (MKVH…DSTS) and 33-93 (LAPK…RWNP). The segment covering 11-21 (SSSWDQHDSTS) has biased composition (low complexity). Basic and acidic residues predominate over residues 71-83 (KFEHKRDPPHQLE). The segment at residues 86 to 150 (PGGTRWNPTQ…NHKARERQKQ (65 aa)) is a DNA-binding region (homeobox; WUS-type).

The protein belongs to the WUS homeobox family. As to expression, expressed in the vasculature of the whole plant (roots, hypocotyls, cotyledons and leaves), trichomes and stomata. Expresse in the developing vascular bundles of root and shoot lateral organs.

The protein resides in the nucleus. Promotes differentiation and/or maintenance of the vascular procambium, the initial cells of the developing vasculature. Part of the TDIF-TDR-WOX4 signaling pathway that plays a crucial role in the maintenance of the vascular meristem organization during secondary growth. Is required for promoting the proliferation of procambial/cambial stem cells but not for repressing their commitment to xylem differentiation in response to the TDIF signal. Acts redundantly with WOX14 downstream of the TDR/PXY receptor kinase to regulate procambial cell proliferation and differentiation in vascular tissue, independently of any role in vascular. Acts as a cambium regulator in the inflorescence stem. Is required for auxin-dependent cambium stimulation in the inflorescence stem. The sequence is that of WUSCHEL-related homeobox 4 (WOX4) from Arabidopsis thaliana (Mouse-ear cress).